Reading from the N-terminus, the 404-residue chain is Tryptophan synthase beta chain (404 aa).

K98 is modified (N6-(pyridoxal phosphate)lysine).

Belongs to the TrpB family. As to quaternary structure, tetramer of two alpha and two beta chains. Requires pyridoxal 5'-phosphate as cofactor.

The enzyme catalyses (1S,2R)-1-C-(indol-3-yl)glycerol 3-phosphate + L-serine = D-glyceraldehyde 3-phosphate + L-tryptophan + H2O. It functions in the pathway amino-acid biosynthesis; L-tryptophan biosynthesis; L-tryptophan from chorismate: step 5/5. The beta subunit is responsible for the synthesis of L-tryptophan from indole and L-serine. The chain is Tryptophan synthase beta chain (trpB) from Methanocaldococcus jannaschii (strain ATCC 43067 / DSM 2661 / JAL-1 / JCM 10045 / NBRC 100440) (Methanococcus jannaschii).